A 250-amino-acid chain; its full sequence is Non-specific acid phosphatase (250 aa).

The signal sequence occupies residues 1 to 20; sequence MKSRYLVFFLPLIVAKYTSA.

Belongs to the class A bacterial acid phosphatase family. Homodimer.

The protein resides in the periplasm. The enzyme catalyses a phosphate monoester + H2O = an alcohol + phosphate. The sequence is that of Non-specific acid phosphatase (phoN) from Salmonella typhimurium (strain LT2 / SGSC1412 / ATCC 700720).